Reading from the N-terminus, the 137-residue chain is MVQLLFKFLIQVGATFVELSRNEIGNKNLLLLIHHAGSLLLSMFGSFSNYPVQKFLDMLDERCLTLIASEFDSYFENLVKDRVGNYVVQRLIWGFKRTGIDLPHSLTSVLVTRSIHLCKHRYGYQVIEAFDRSTRLA.

Pumilio repeat units lie at residues 70 to 105 and 108 to 137; these read EFDSYFENLVKDRVGNYVVQRLIWGFKRTGIDLPHS and SVLVTRSIHLCKHRYGYQVIEAFDRSTRLA.

It is found in the cytoplasm. Functionally, sequence-specific RNA-binding protein that regulates translation and mRNA stability by binding the 3'-UTR of target mRNAs. This chain is Putative pumilio homolog 25 (APUM25), found in Arabidopsis thaliana (Mouse-ear cress).